A 313-amino-acid polypeptide reads, in one-letter code: uncharacterized protein (313 aa).

3 consecutive transmembrane segments (helical) span residues 41 to 61, 68 to 88, and 102 to 122; these read LAGT…GLMV, VHSV…FHYF, and QLLL…KLVL.

Belongs to the cytochrome b family.

The protein resides in the mitochondrion membrane. This is an uncharacterized protein from Arabidopsis thaliana (Mouse-ear cress).